Here is a 390-residue protein sequence, read N- to C-terminus: METFLFTSESVNEGHPDKLCDQVSDAILDACLEQDPESKVACETCTKTNMVMVFGEITTKATVDYEKIVRDTCRGIGFVSADVGLDADNCKVLVNIEQQSPDIAQGVHGHLTKKPEEIGAGDQGHMFGYATDETPELMPLTHVLATKLGAKLTEVRKNKTCPWLRPDGKTQVTVEYKNDNGAMVPIRVHTVLISTQHDETVTNDQIAQDLKEHVIKPVIPAKYLDENTIFHLNPSGRFVIGGPHGDAGLTGRKIIIDTYGGWGAHGGGAFSGKDPTKVDRSGAYIVRQAAKSVVASGLARRCIVQVSYAIGVAEPLSVFVDTYKTGTIPDKDILVLIKENFDFRPGMMSINLDLLRGGNYRYQKTAAYGHFGRDDPDFTWETVKVLKPKA.

Residue Glu9 participates in Mg(2+) binding. ATP is bound at residue His15. Glu43 contacts K(+). 2 residues coordinate L-methionine: Glu56 and Gln99. Residues Asp167–Lys169, Ser235–Phe238, Asp246, Arg252–Lys253, Ala269, Lys273, and Lys277 each bind ATP. Asp246 is a binding site for L-methionine. Lys277 provides a ligand contact to L-methionine.

It belongs to the AdoMet synthase family. Homotetramer. Mn(2+) serves as cofactor. Mg(2+) is required as a cofactor. The cofactor is Co(2+). Requires K(+) as cofactor. As to expression, mostly expressed in stems and leaves.

The protein localises to the cytoplasm. The enzyme catalyses L-methionine + ATP + H2O = S-adenosyl-L-methionine + phosphate + diphosphate. Its pathway is amino-acid biosynthesis; S-adenosyl-L-methionine biosynthesis; S-adenosyl-L-methionine from L-methionine: step 1/1. In terms of biological role, catalyzes the formation of S-adenosylmethionine from methionine and ATP. The reaction comprises two steps that are both catalyzed by the same enzyme: formation of S-adenosylmethionine (AdoMet) and triphosphate, and subsequent hydrolysis of the triphosphate. This is S-adenosylmethionine synthase 3 (SAM3) from Solanum lycopersicum (Tomato).